Reading from the N-terminus, the 435-residue chain is Glutamyl-tRNA reductase (435 aa).

Residues 49-52 (TCNR), Ser109, 114-116 (ETQ), and Gln120 contribute to the substrate site. The active-site Nucleophile is Cys50. 189–194 (GAGEMS) is a binding site for NADP(+).

This sequence belongs to the glutamyl-tRNA reductase family. In terms of assembly, homodimer.

It carries out the reaction (S)-4-amino-5-oxopentanoate + tRNA(Glu) + NADP(+) = L-glutamyl-tRNA(Glu) + NADPH + H(+). It participates in porphyrin-containing compound metabolism; protoporphyrin-IX biosynthesis; 5-aminolevulinate from L-glutamyl-tRNA(Glu): step 1/2. Its function is as follows. Catalyzes the NADPH-dependent reduction of glutamyl-tRNA(Glu) to glutamate 1-semialdehyde (GSA). The chain is Glutamyl-tRNA reductase from Listeria monocytogenes serovar 1/2a (strain ATCC BAA-679 / EGD-e).